The primary structure comprises 1250 residues: DNA-directed RNA polymerase subunit beta (1250 aa).

Residues 1139 to 1226 form a disordered region; that stretch reads GGAELAKPAP…DLFDEGDEDL (88 aa). Acidic residues-rich tracts occupy residues 1155 to 1183 and 1207 to 1226; these read ESGE…DPEE and ADDD…DEDL.

This sequence belongs to the RNA polymerase beta chain family. In terms of assembly, the RNAP catalytic core consists of 2 alpha, 1 beta, 1 beta' and 1 omega subunit. When a sigma factor is associated with the core the holoenzyme is formed, which can initiate transcription.

The catalysed reaction is RNA(n) + a ribonucleoside 5'-triphosphate = RNA(n+1) + diphosphate. Functionally, DNA-dependent RNA polymerase catalyzes the transcription of DNA into RNA using the four ribonucleoside triphosphates as substrates. The protein is DNA-directed RNA polymerase subunit beta of Symbiobacterium thermophilum (strain DSM 24528 / JCM 14929 / IAM 14863 / T).